Here is a 545-residue protein sequence, read N- to C-terminus: Membrane protein insertase YidC (545 aa).

A run of 6 helical transmembrane segments spans residues 10 to 30, 319 to 339, 341 to 361, 407 to 427, 467 to 487, and 502 to 522; these read AIYL…IFFS, LLYF…NVIP, WGLS…PLTF, LGGC…YGLV, ILPF…SNVS, and MPIM…IYWI.

This sequence belongs to the OXA1/ALB3/YidC family. Type 1 subfamily. In terms of assembly, interacts with the Sec translocase complex via SecD. Specifically interacts with transmembrane segments of nascent integral membrane proteins during membrane integration.

The protein localises to the cell inner membrane. Functionally, required for the insertion and/or proper folding and/or complex formation of integral membrane proteins into the membrane. Involved in integration of membrane proteins that insert both dependently and independently of the Sec translocase complex, as well as at least some lipoproteins. Aids folding of multispanning membrane proteins. The chain is Membrane protein insertase YidC from Borrelia hermsii (strain HS1 / DAH).